Consider the following 159-residue polypeptide: Small ribosomal subunit protein uS9 (159 aa).

The protein belongs to the universal ribosomal protein uS9 family.

In Rickettsia conorii (strain ATCC VR-613 / Malish 7), this protein is Small ribosomal subunit protein uS9.